A 476-amino-acid chain; its full sequence is MSYEERVNAHPNLGDESDVEEEALVNDYREQVNFDDGMSELERTTSLGTGSQTQDLQAQLAAAATPLEYQATLETKFASYDNYCSLFHYILNSEGPVELEVPSYYWAWDVIDEFIYQFESFCRYRNRVARSGSNEEEAQLLRENPNTWGCYSVLNVLYSLIQKSQINEQLAAIKRGEDPLAFAGEYGSRPLYKMLGYFSIIGLLRVHCLLGDFSLALKTLDDIEMNKKAMFARVMAAHFTTYYYVGFSYMMMRRYGDAIRMFSHILVYVSRTKNFQKGGNSYDAIAKKNDQMYALIAICVALHPTRLDDTIHSALREKYGEQLLRLQHGGPDALPLFEELFRSACPKFISPTPPDFDNPALNIDPVDHHTAIFMDEVKNTLYNPTIRSYLKLYTTMDLKKLAGFLEVQPEVLRSWLLVNKQRSRQVRWVEGGLLEGEVVSANDLDYALENDLIHVSETKAGRRLVDWYLRNLARVY.

A PCI domain is found at 257-452 (DAIRMFSHIL…DLDYALENDL (196 aa)).

Belongs to the eIF-3 subunit L family. As to quaternary structure, component of the eukaryotic translation initiation factor 3 (eIF-3) complex.

Its subcellular location is the cytoplasm. Its function is as follows. Component of the eukaryotic translation initiation factor 3 (eIF-3) complex, which is involved in protein synthesis of a specialized repertoire of mRNAs and, together with other initiation factors, stimulates binding of mRNA and methionyl-tRNAi to the 40S ribosome. The eIF-3 complex specifically targets and initiates translation of a subset of mRNAs involved in cell proliferation. The polypeptide is Eukaryotic translation initiation factor 3 subunit L (Neosartorya fischeri (strain ATCC 1020 / DSM 3700 / CBS 544.65 / FGSC A1164 / JCM 1740 / NRRL 181 / WB 181) (Aspergillus fischerianus)).